A 273-amino-acid chain; its full sequence is Proteasome subunit beta type-10 (273 aa).

The residue at position 1 (methionine 1) is an N-acetylmethionine. Residues 1–39 (MQKTVLEPQRGFSFENCERNAALQRALPGLRVPHARKTG) constitute a propeptide, removed in mature form. Threonine 40 acts as the Nucleophile in catalysis. Serine 230 carries the phosphoserine modification.

This sequence belongs to the peptidase T1B family. The 26S proteasome consists of a 20S proteasome core and two 19S regulatory subunits. The 20S proteasome core is composed of 28 subunits that are arranged in four stacked rings, resulting in a barrel-shaped structure. The two end rings are each formed by seven alpha subunits, and the two central rings are each formed by seven beta subunits. The catalytic chamber with the active sites is on the inside of the barrel. Component of the immunoproteasome, where it displaces the equivalent housekeeping subunit PSMB7. Component of the spermatoproteasome, a form of the proteasome specifically found in testis. Post-translationally, autocleaved. The resulting N-terminal Thr residue of the mature subunit is responsible for the nucleophile proteolytic activity.

Its subcellular location is the cytoplasm. The protein localises to the nucleus. It carries out the reaction Cleavage of peptide bonds with very broad specificity.. The proteasome is a multicatalytic proteinase complex which is characterized by its ability to cleave peptides with Arg, Phe, Tyr, Leu, and Glu adjacent to the leaving group at neutral or slightly basic pH. The proteasome has an ATP-dependent proteolytic activity. This subunit is involved in antigen processing to generate class I binding peptides. This is Proteasome subunit beta type-10 (PSMB10) from Bos taurus (Bovine).